Consider the following 145-residue polypeptide: uncharacterized protein (145 aa).

It belongs to the asfivirus K145R family.

It localises to the virion. This is an uncharacterized protein from Ornithodoros (relapsing fever ticks).